Consider the following 172-residue polypeptide: MTILPRHKDVAKSRLKMSNPWHLLAVGFGSGLSPIVPGTMGSLAAIPFWYLMTFLPWQLYSLVVMLGICIGVYLCHQTAKDMGVHDHGSIVWDEFIGMWITLMALPTNDWQWVAAGFVIFRILDMWKPWPIRWFDRNVHGGMGIMIDDIVAGVISAGILYFIGHHWPLGILS.

Residues 1–31 (MTILPRHKDVAKSRLKMSNPWHLLAVGFGSG) lie on the Cytoplasmic side of the membrane. Residues 32 to 52 (LSPIVPGTMGSLAAIPFWYLM) traverse the membrane as a helical segment. Threonine 53 is a topological domain (periplasmic). Residues 54-74 (FLPWQLYSLVVMLGICIGVYL) form a helical membrane-spanning segment. Topologically, residues 75-141 (CHQTAKDMGV…RWFDRNVHGG (67 aa)) are cytoplasmic. A helical transmembrane segment spans residues 142–162 (MGIMIDDIVAGVISAGILYFI). The Periplasmic segment spans residues 163–172 (GHHWPLGILS).

It depends on Mg(2+) as a cofactor.

It is found in the cell inner membrane. It catalyses the reaction a 1,2-diacyl-sn-glycero-3-phospho-(1'-sn-glycero-3'-phosphate) + H2O = a 1,2-diacyl-sn-glycero-3-phospho-(1'-sn-glycerol) + phosphate. Its pathway is phospholipid metabolism; phosphatidylglycerol biosynthesis; phosphatidylglycerol from CDP-diacylglycerol: step 2/2. Lipid phosphatase which dephosphorylates phosphatidylglycerophosphate (PGP) to phosphatidylglycerol (PG). The sequence is that of Phosphatidylglycerophosphatase A (pgpA) from Escherichia coli (strain K12).